We begin with the raw amino-acid sequence, 2090 residues long: Ninein (2090 aa).

2 EF-hand domains span residues 8 to 43 and 42 to 77; these read QHEA…LSLE and LEEV…ILSR. Residue Ser152 is modified to Phosphoserine. 2 consecutive EF-hand domains span residues 182 to 217 and 219 to 252; these read WIEE…YGLQ and VDGE…NGKS. A GTP-binding site is contributed by 245-252; it reads GLFKNGKS. The residue at position 269 (Ser269) is a Phosphoserine. Residue 300 to 304 coordinates GTP; sequence DGMGH. In terms of domain architecture, EF-hand 5 spans 317-352; that stretch reads EGIENSQEILKALDFSLDGNINLTELTLALENELLV. The stretch at 357–570 forms a coiled coil; the sequence is IHQAALASFK…YRAQGRVLRL (214 aa). 420–423 contacts GTP; sequence RKLD. The segment at 574–595 is disordered; sequence NSPSEEVEANSGGIEPEHGLGS. 4 coiled-coil regions span residues 625-1027, 1068-1099, 1181-1341, and 1441-1816; these read LRLE…QATS, LSLQ…QKLE, SELE…SVVQ, and QDKH…AGGK. Positions 802–1505 are important for interaction with CEP170; sequence KMETECNRRT…HDLQITCSEM (704 aa). The segment at 1152–1190 is disordered; that stretch reads VRDLGSTGTSSVQRQEVKIEESEASVEGFSELENSEETR. Phosphoserine occurs at positions 1550 and 1837. Coiled-coil stretches lie at residues 1854-1885 and 1922-2067; these read QENE…SNLL and ANRK…QVSL.

In terms of assembly, homooligomer. Interacts with GSK3B/GSK3-beta via its C-terminal domain. Interacts with C14ORF166, such interaction may prevent its phosphorylation by GSK3B. Interacts with AUNIP (via N-terminus). Identified in a complex with AUNIP and AURKA. Interacts with CCDC120. Interacts (via C-terminus) with CEP250. Interacts with CEP170. Interacts with the gamma-tubulin ring complex component TUBGCP3. Interacts with gamma-tubulin. Isoform 6 does not interact with CEP170 or CEP250. Post-translationally, phosphorylated by AURKA/Aurora kinase A and PKA kinases but not CK2 or AURKB/ Aurora kinase B. Ubiquitous. Highly expressed in heart and skeletal muscle. Isoform 1 is more expressed than isoform 5.

The protein localises to the cytoplasm. It localises to the cytoskeleton. It is found in the microtubule organizing center. The protein resides in the centrosome. Its subcellular location is the centriole. Its function is as follows. Centrosomal protein required in the positioning and anchorage of the microtubule minus-end in epithelial cells. May also act as a centrosome maturation factor. May play a role in microtubule nucleation, by recruiting the gamma-tubulin ring complex to the centrosome. Overexpression does not perturb nucleation or elongation of microtubules but suppresses release of microtubules. Required for centriole organization and microtubule anchoring at the mother centriole. This is Ninein (NIN) from Homo sapiens (Human).